The chain runs to 489 residues: COX3 mRNA-specific translational activator PET494 (489 aa).

The protein localises to the mitochondrion inner membrane. Functionally, required for the expression of the mitochondrial gene for cytochrome c oxidase subunit III (COX3). The sequence is that of COX3 mRNA-specific translational activator PET494 (PET494) from Saccharomyces bayanus (Yeast).